A 565-amino-acid polypeptide reads, in one-letter code: Bifunctional dihydrofolate reductase-thymidylate synthase 2 (565 aa).

The DHFR domain occupies 65–242 (TYQVVVAATK…LRFSFTTHVR (178 aa)). Substrate is bound at residue Val-69. NADP(+) is bound by residues Ala-71 and 77 to 83 (GIGKDGK). Asp-91 is a substrate binding site. NADP(+) is bound by residues 115 to 117 (RKT) and 136 to 139 (LSRS). Ile-178 is a binding site for substrate. 179 to 186 (GGGDILRE) is a binding site for NADP(+). Thr-199 is a substrate binding site. The tract at residues 245-280 (SSSAGEASDESDGSKVLQVDWKKFSSVLPKMIFDRH) is hinge. Positions 281 to 565 (EEYLYLNLVK…HKKIDMKMAV (285 aa)) are thymidylate synthase. DUMP is bound at residue Arg-302. Cys-447 is an active-site residue. DUMP-binding positions include His-448, 466 to 470 (QRSAD), Asn-478, and 508 to 510 (HVY).

This sequence in the N-terminal section; belongs to the dihydrofolate reductase family. In the C-terminal section; belongs to the thymidylate synthase family. As to quaternary structure, heterodimer or homodimer.

The enzyme catalyses (6S)-5,6,7,8-tetrahydrofolate + NADP(+) = 7,8-dihydrofolate + NADPH + H(+). It carries out the reaction dUMP + (6R)-5,10-methylene-5,6,7,8-tetrahydrofolate = 7,8-dihydrofolate + dTMP. The protein operates within cofactor biosynthesis; tetrahydrofolate biosynthesis; 5,6,7,8-tetrahydrofolate from 7,8-dihydrofolate: step 1/1. Bifunctional enzyme. Involved in de novo dTMP biosynthesis. Key enzyme in folate metabolism. Can play two different roles depending on the source of dihydrofolate: de novo synthesis of tetrahydrofolate or recycling of the dihydrofolate released as one of the end products of the TS catalyzed reaction. Catalyzes an essential reaction for de novo glycine and purine synthesis, DNA precursor synthesis, and for the conversion of dUMP to dTMP. The sequence is that of Bifunctional dihydrofolate reductase-thymidylate synthase 2 (THY-2) from Arabidopsis thaliana (Mouse-ear cress).